The sequence spans 169 residues: ATP synthase subunit b (169 aa).

Residues 26 to 46 form a helical membrane-spanning segment; the sequence is FFFVLLIFLIVLGVIAKWVVP.

Belongs to the ATPase B chain family. In terms of assembly, F-type ATPases have 2 components, F(1) - the catalytic core - and F(0) - the membrane proton channel. F(1) has five subunits: alpha(3), beta(3), gamma(1), delta(1), epsilon(1). F(0) has three main subunits: a(1), b(2) and c(10-14). The alpha and beta chains form an alternating ring which encloses part of the gamma chain. F(1) is attached to F(0) by a central stalk formed by the gamma and epsilon chains, while a peripheral stalk is formed by the delta and b chains.

The protein resides in the cell membrane. Its function is as follows. F(1)F(0) ATP synthase produces ATP from ADP in the presence of a proton or sodium gradient. F-type ATPases consist of two structural domains, F(1) containing the extramembraneous catalytic core and F(0) containing the membrane proton channel, linked together by a central stalk and a peripheral stalk. During catalysis, ATP synthesis in the catalytic domain of F(1) is coupled via a rotary mechanism of the central stalk subunits to proton translocation. Component of the F(0) channel, it forms part of the peripheral stalk, linking F(1) to F(0). This is ATP synthase subunit b from Mycobacterium sp. (strain JLS).